The primary structure comprises 3010 residues: Genome polyprotein (3010 aa).

S2 is modified (N-acetylserine; by host). Residues 2–23 (STNPKPQRKTKRNTNRRPQDVK) form an interaction with STAT1 region. An interaction with EIF2AK2/PKR region spans residues 2–58 (STNPKPQRKTKRNTNRRPQDVKFPGGGQIVGGVYLLPRRGPRLGVRATRKTSERSQP). Residues 2–59 (STNPKPQRKTKRNTNRRPQDVKFPGGGQIVGGVYLLPRRGPRLGVRATRKTSERSQPR) form an interaction with DDX3X region. The tract at residues 2-75 (STNPKPQRKT…PKARQPEGRA (74 aa)) is disordered. The Cytoplasmic segment spans residues 2-168 (STNPKPQRKT…EDGVNYATGN (167 aa)). 2 consecutive short sequence motifs (nuclear localization signal) follow at residues 5–13 (PKPQRKTKR) and 38–43 (PRRGPR). Basic residues predominate over residues 7–16 (PQRKTKRNTN). The segment covering 32 to 47 (GGVYLLPRRGPRLGVR) has biased composition (low complexity). S53 is modified (phosphoserine; by host). Short sequence motifs (nuclear localization signal) lie at residues 58 to 64 (PRGRRQP) and 66 to 71 (PKARQP). Residue S99 is modified to Phosphoserine; by host. The segment at 112–152 (PRRRSRNLGKVIDTLTCGFADLMGYIPLVGAPLGGVARALA) is important for endoplasmic reticulum and mitochondrial localization. A Phosphoserine; by host PKA modification is found at S116. The interval 122–173 (VIDTLTCGFADLMGYIPLVGAPLGGVARALAHGVRVVEDGVNYATGNLPGCS) is interaction with APOA2. Positions 164–167 (YATG) are important for lipid droplets localization. A helical membrane pass occupies residues 169-189 (LPGCSFSIFLLALLSCLTIPA). Residues 178 to 191 (LLALLSCLTIPASA) constitute a propeptide, ER anchor for the core protein, removed in mature form by host signal peptidase. At 190-358 (SAYEVRNVSG…AGAHWGVLAG (169 aa)) the chain is on the lumenal side. 4 N-linked (GlcNAc...) asparagine; by host glycosylation sites follow: N196, N209, N234, and N250. An important for fusion region spans residues 265-296 (LVGAAAFCSAMYVGDLCGSVFLVSQLFTFSPR). An N-linked (GlcNAc...) asparagine; by host glycan is attached at N305. The chain crosses the membrane as a helical span at residues 359 to 379 (LAYYSMVGNWAKVLIVMLLFA). At 380–725 (GVDGETRVTG…WDYIVILFLL (346 aa)) the chain is on the lumenal side. The segment at 385-411 (TRVTGGQIARNAYSLTTLFSSGSAQNI) is HVR1. N-linked (GlcNAc...) (high mannose) asparagine; by host glycans are attached at residues N417, N423, N430, and N448. 4 cysteine pairs are disulfide-bonded: C429-C552, C452-C459, C486-C494, and C503-C508. The tract at residues 474-479 (YAEQGG) is HVR2. The interval 480–493 (QDQRPYCWHYAPKP) is CD81-binding 1. A glycan (N-linked (GlcNAc...) (high mannose) asparagine; by host) is linked at N532. An N-linked (GlcNAc...) asparagine; by host glycan is attached at N540. Residues 544–551 (PPQGNWFG) are CD81-binding 2. Residue N556 is glycosylated (N-linked (GlcNAc...) (high mannose) asparagine; by host). C564 and C569 form a disulfide bridge. N-linked (GlcNAc...) (high mannose) asparagine; by host glycosylation occurs at N576. Disulfide bonds link C581–C585, C597–C620, and C607–C644. Residues N623 and N645 are each glycosylated (N-linked (GlcNAc...) (high mannose) asparagine; by host). C652 and C677 form a disulfide bridge. Positions 660–671 (LELSPLLLSTTE) are PKR/eIF2-alpha phosphorylation homology domain (PePHD). The chain crosses the membrane as a helical span at residues 726-746 (LADARVCACLWMMLLIAQAEA). Topologically, residues 747-757 (ALENLVVLNAA) are lumenal. The helical transmembrane segment at 758–778 (SVAGAHGILSFLVFFCAAWYI) threads the bilayer. The Cytoplasmic portion of the chain corresponds to 779 to 781 (KGK). A helical membrane pass occupies residues 782–803 (LVPGAAYAFYGVWPLLLLLLAL). The Lumenal segment spans residues 804–813 (PPRAYAMERE). Residues 814 to 834 (MAASCGGAVFVGLVLLTLSPY) traverse the membrane as a helical segment. At 835–838 (YKEF) the chain is on the cytoplasmic side. The chain crosses the membrane as a helical span at residues 839-859 (LARLIWWLQYFITRAEAHLQV). Topologically, residues 860-881 (WIPPLNIRGGRDAIILLACVVH) are lumenal. The chain crosses the membrane as a helical span at residues 882-902 (PELIFDITKLLLAILGPLMVL). The 124-residue stretch at 903-1026 (QASITQVPYF…SLEGQGWRLL (124 aa)) folds into the Peptidase C18 domain. Residues 903–1657 (QASITQVPYF…CMSADLEVVT (755 aa)) lie on the Cytoplasmic side of the membrane. Residues 904–1206 (ASITQVPYFV…PVESMETTMR (303 aa)) form a protease NS2-3 region. C922 is lipidated: S-palmitoyl cysteine; by host. The segment at 929–949 (AGGHYVQMAFVKLTALTGTYV) is interaction with host SCPS1. Catalysis depends on for protease NS2 activity; shared with dimeric partner residues H952, E972, and C993. The Peptidase S29 domain occupies 1027-1208 (APITAYSQQT…ESMETTMRSP (182 aa)). Active-site charge relay system; for serine protease NS3 activity residues include H1083 and D1107. Residues C1123 and C1125 each contribute to the Zn(2+) site. S1165 serves as the catalytic Charge relay system; for serine protease NS3 activity. Residues C1171 and H1175 each contribute to the Zn(2+) site. Residues 1217–1369 (PAVPQTFQVA…PNIEEVALSN (153 aa)) enclose the Helicase ATP-binding domain. 1230 to 1237 (APTGSGKS) serves as a coordination point for ATP. S1237 and E1317 together coordinate Mg(2+). Residues 1316-1319 (DECH) carry the DECH box motif. The tract at residues 1486 to 1497 (QRRGRTGRGRRG) is RNA-binding. Residues 1658–1678 (STWVLVGGVLAALAAYCLTTG) traverse the membrane as a helical segment. The segment at 1679–1690 (SVVIVGRIILSG) is NS3-binding. At 1679-1805 (SVVIVGRIIL…SITSPLSTQN (127 aa)) the chain is on the cytoplasmic side. The chain crosses the membrane as a helical span at residues 1806 to 1824 (TLLFNIWGGWVAAQLAPPS). Over 1825–1828 (AASA) the chain is Lumenal. Residues 1829 to 1849 (FVGAGIAGAAVGSIGLGKVLV) traverse the membrane as a helical segment. D1850 is a topological domain (cytoplasmic). The helical transmembrane segment at 1851–1871 (ILAGYGAGVAGALVAFKIMSG) threads the bilayer. Residues 1872-1881 (EVPSTEDLVN) are Lumenal-facing. Residues 1882-1902 (LLPAILSPGALVVGVVCAAIL) form a helical membrane-spanning segment. Residues 1903-1972 (RRHVGPGEGA…WINEDCSTPC (70 aa)) are Cytoplasmic-facing. Residues C1968 and C1972 are each lipidated (S-palmitoyl cysteine; by host). The stretch at 1973-2002 (SGSWLRDVWDWICTVLTDFKTWLQSKLLPR) is an intramembrane region. Topologically, residues 2003 to 2989 (LPGVPFFSCQ…YHSLSRARPR (987 aa)) are cytoplasmic. Zn(2+) is bound by residues C2011, C2029, C2031, and C2052. The segment at 2120–2208 (EFFTEVDGVR…ASSSASQLSA (89 aa)) is FKBP8-binding. Positions 2120-2332 (EFFTEVDGVR…PIPPPRRKRT (213 aa)) are transcriptional activation. An interaction with non-structural protein 4A region spans residues 2135–2139 (PACKP). Residues 2189–2441 (RLARGSPPSL…PCAAEESKLP (253 aa)) are interaction with host SKP2. The residue at position 2194 (S2194) is a Phosphoserine; by host; in p56. Phosphoserine; by host; in p58 occurs at positions 2197, 2201, 2204, 2207, and 2210. The segment at 2210 to 2249 (SLKATCTTHHDSPDVDLIEANLLWRQEMGGNITRVESENK) is ISDR. An interaction with EIF2AK2/PKR region spans residues 2210–2275 (SLKATCTTHH…REPSVAAEIL (66 aa)). Residues 2249-2306 (KVVILDSFDPLRAEEDEREPSVAAEILRKTKRFPPAMPIWARPDYNPPLLESWKDPDY) form an NS4B-binding region. The SH3-binding signature appears at 2322–2325 (PPIP). Positions 2326–2334 (PPRRKRTVV) match the Nuclear localization signal motif. Residue K2350 forms a Glycyl lysine isopeptide (Lys-Gly) (interchain with G-Cter in ubiquitin) linkage. A compositionally biased stretch (polar residues) spans 2351 to 2365 (TFGSSGSSAVDSGTA). The disordered stretch occupies residues 2351–2407 (TFGSSGSSAVDSGTATAPPDQASDDGDQGSDVESYSSMPPLEGEPGDPDLSDGSWST). The V3 stretch occupies residues 2354–2377 (SSGSSAVDSGTATAPPDQASDDGD). Residues S2448 and S2461 each carry the phosphoserine; by host modification. In terms of domain architecture, RdRp catalytic spans 2633 to 2751 (PMGFSYDTRC…ICESAGTQED (119 aa)). Residues D2639, D2737, and D2738 each coordinate Mg(2+). The chain crosses the membrane as a helical span at residues 2990–3010 (WFMLCLLLLSVGVGIYLLPNR).

This sequence belongs to the hepacivirus polyprotein family. Homooligomer. Interacts with E1 (via C-terminus). Interacts with the non-structural protein 5A. Interacts (via N-terminus) with host STAT1 (via SH2 domain); this interaction results in decreased STAT1 phosphorylation and ubiquitin-mediated proteasome-dependent STAT1 degradation, leading to decreased IFN-stimulated gene transcription. Interacts with host STAT3; this interaction constitutively activates STAT3. Interacts with host LTBR receptor. Interacts with host TNFRSF1A receptor and possibly induces apoptosis. Interacts with host HNRPK. Interacts with host YWHAE. Interacts with host UBE3A/E6AP. Interacts with host DDX3X. Interacts with host APOA2. Interacts with host RXRA protein. Interacts with host SP110 isoform 3/Sp110b; this interaction sequesters the transcriptional corepressor SP110 away from the nucleus. Interacts with host CREB3 nuclear transcription protein; this interaction triggers cell transformation. Interacts with host ACY3. Interacts with host C1QR1. Interacts with host RBM24; this interaction, which enhances the interaction of the mature core protein with 5'-UTR, may inhibit viral translation and favor replication. Interacts with host EIF2AK2/PKR; this interaction induces the autophosphorylation of EIF2AK2. Part of the viral assembly initiation complex composed of NS2, E1, E2, NS3, NS4A, NS5A and the mature core protein. As to quaternary structure, forms a heterodimer with envelope glycoprotein E2. Interacts with mature core protein. Interacts with protease NS2. The heterodimer E1/E2 interacts with host CLDN1; this interaction plays a role in viral entry into host cell. Interacts with host SPSB2 (via C-terminus). Part of the viral assembly initiation complex composed of NS2, E1, E2, NS3, NS4A, NS5A and the mature core protein. Interacts with host NEURL3; this interaction prevents E1 binding to glycoprotein E2. In terms of assembly, forms a heterodimer with envelope glycoprotein E1. Interacts with host CD81 and SCARB1 receptors; these interactions play a role in viral entry into host cell. Interacts with host EIF2AK2/PKR; this interaction inhibits EIF2AK2 and probably allows the virus to evade the innate immune response. Interacts with host CD209/DC-SIGN and CLEC4M/DC-SIGNR. Interact with host SPCS1; this interaction is essential for viral particle assembly. Interacts with protease NS2. The heterodimer E1/E2 interacts with host CLDN1; this interaction plays a role in viral entry into host cell. Part of the viral assembly initiation complex composed of NS2, E1, E2, NS3, NS4A, NS5A and the mature core protein. Interacts with host SLC3A2/4F2hc; the interaction may facilitate viral entry into host cell. Interacts with human PLSCR1. Homohexamer. Homoheptamer. Interacts with protease NS2. As to quaternary structure, homodimer. Interacts with host SPCS1; this interaction is essential for viral particle assembly. Interacts with envelope glycoprotein E1. Interacts with envelope glycoprotein E2. Interacts with viroporin p7. Interacts with serine protease/helicase NS3. Part of the replication complex composed of NS2, NS3, NS4A, NS4B, NS5A and the RNA-directed RNA polymerase embedded in an ER-derived membranous web. Part of the viral assembly initiation complex composed of NS2, E1, E2, NS3, NS4A, NS5A and the mature core protein. In terms of assembly, interacts with protease NS2. Interacts with non-structural protein 4A; this interaction stabilizes the folding of NS3 serine protease. NS3-NS4A interaction is essential for NS3 activation and allows membrane anchorage of the latter. NS3/NS4A complex also prevents phosphorylation of host IRF3, thus preventing the establishment of dsRNA induced antiviral state. Interacts with host MAVS; this interaction leads to the cleavage and inhibition of host MAVS. Interacts with host TICAM1; this interaction leads to the cleavage and inhibition of host TICAM1. Interacts with host TANK-binding kinase/TBK1; this interaction results in the inhibition of the association between TBK1 and IRF3, which leads to the inhibition of IRF3 activation. Interacts with host RBM24. Part of the replication complex composed of NS2, NS3, NS4A, NS4B, NS5A and the RNA-directed RNA polymerase embedded in an ER-derived membranous web. Part of the viral assembly initiation complex composed of NS2, E1, E2, NS3, NS4A, NS5A and the mature core protein. Interacts with NS3 serine protease; this interaction stabilizes the folding of NS3 serine protease. NS3-NS4A interaction is essential for NS3 activation and allows membrane anchorage of the latter. Interacts with non-structural protein 5A (via N-terminus). Part of the replication complex composed of NS2, NS3, NS4A, NS4B, NS5A and the RNA-directed RNA polymerase embedded in an ER-derived membranous web. Part of the viral assembly initiation complex composed of NS2, E1, E2, NS3, NS4A, NS5A and the mature core protein. As to quaternary structure, homomultimer. Interacts with non-structural protein NS5A. Interacts with host PLA2G4C; this interaction likely initiates the recruitment of replication complexes to lipid droplets. Interacts with host STING; this interaction disrupts the interaction between STING and TBK1 thereby suppressing the interferon signaling. Part of the replication complex composed of NS2, NS3, NS4A, NS4B, NS5A and the RNA-directed RNA polymerase embedded in an ER-derived membranous web. In terms of assembly, monomer. Homodimer; dimerization is required for RNA-binding. Interacts with the mature core protein. Interacts (via N-terminus) with non-structural protein 4A. Interacts with non-structural protein 4B. Interacts (via region D2) with RNA-directed RNA polymerase. Part of the viral assembly initiation complex composed of NS2, E1, E2, NS3, NS4A, NS5A and the mature core protein. Part of the replication complex composed of NS2, NS3, NS4A, NS4B, NS5A and the RNA-directed RNA polymerase embedded in an ER-derived membranous web. Interacts with host GRB2. Interacts with host BIN1. Interacts with host PIK3R1. Interacts with host SRCAP. Interacts with host FKBP8. Interacts (via C-terminus) with host VAPB (via MSP domain). Interacts with host EIF2AK2/PKR; this interaction leads to disruption of EIF2AK2 dimerization by NS5A and probably allows the virus to evade the innate immune response. Interacts (via N-terminus) with host PACSIN2 (via N-terminus); this interaction attenuates protein kinase C alpha-mediated phosphorylation of PACSIN2 by disrupting the interaction between PACSIN2 and PRKCA. Interacts (via N-terminus) with host SRC kinase (via SH2 domain). Interacts with most Src-family kinases. Interacts with host IFI27 and SKP2; promotes the ubiquitin-mediated proteasomal degradation of NS5A. Interacts with host GPS2. Interacts with host TNFRSF21; this interaction allows the modulation by the virus of JNK, p38 MAPK, STAT3, and Akt signaling pathways in a DR6-dependent manner. Interacts (via N-terminus) with host CIDEB (via N-terminus); this interaction seems to regulate the association of HCV particles with APOE. Interacts with host CHKA/Choline Kinase-alpha; CHKA bridges host PI4KA and NS5A and potentiates NS5A-stimulated PI4KA activity, which then facilitates the targeting of the ternary complex to the ER for viral replication. Interacts with host SPSB2 (via C-terminus); this interaction targets NS5A for ubiquitination and degradation. Interacts with host RAB18; this interaction may promote the association of NS5A and other replicase components with lipid droplets. Interacts (via region D2) with host PPIA/CYPA; the interaction stimulates RNA-binding ability of NS5A and is dependent on the peptidyl-prolyl cis-trans isomerase activity of PPIA/CYPA. Interacts with host TRIM14; this interaction induces the degradation of NS5A. Homooligomer. Interacts with non-structural protein 5A. Interacts with host VAPB. Interacts with host PRK2/PKN2. Interacts with host HNRNPA1 and SEPT6; these interactions facilitate viral replication. Part of the replication complex composed of NS2, NS3, NS4A, NS4B, NS5A and the RNA-directed RNA polymerase. Requires Zn(2+) as cofactor. It depends on Mg(2+) as a cofactor. Post-translationally, specific enzymatic cleavages in vivo yield mature proteins. The structural proteins, core, E1, E2 and p7 are produced by proteolytic processing by host signal peptidases. The core protein precursor is synthesized as a 23 kDa, which is retained in the ER membrane through the hydrophobic signal peptide. Cleavage by the signal peptidase releases the 21 kDa mature core protein. The cleavage of the core protein precursor occurs between aminoacids 176 and 188 but the exact cleavage site is not known. Some degraded forms of the core protein appear as well during the course of infection. The other proteins (p7, NS2, NS3, NS4A, NS4B, NS5A and NS5B) are cleaved by the viral proteases. Autoprocessing between NS2 and NS3 is mediated by the NS2 cysteine protease catalytic domain and regulated by the NS3 N-terminal domain. Phosphorylated by host PKC and PKA. In terms of processing, ubiquitinated; mediated by UBE3A and leading to core protein subsequent proteasomal degradation. Post-translationally, highly N-glycosylated. Palmitoylation is required for NS2/3 autoprocessing and E2 recruitment to membranes. In terms of processing, palmitoylated. This modification may play a role in its polymerization or in protein-protein interactions. Post-translationally, phosphorylated on serines in a basal form termed p56. p58 is a hyperphosphorylated form of p56. p56 and p58 coexist in the cell in roughly equivalent amounts. Hyperphosphorylation is dependent on the presence of NS4A. Host CSNK1A1/CKI-alpha or RPS6KB1 kinases may be responsible for NS5A phosphorylation. Tyrosine phosphorylation is essential for the interaction with host SRC. In terms of processing, ubiquitinated. Ubiquitination, most probably at Lys-2350, mediated by host IFI27 and SKP2 leads to proteasomal degradation, restricting viral infection. Ubiquitination by host TRIM22 leads to interruption of viral replication. Post-translationally, the N-terminus is phosphorylated by host PRK2/PKN2.

The protein localises to the host endoplasmic reticulum membrane. The protein resides in the host mitochondrion membrane. Its subcellular location is the virion. It localises to the host cytoplasm. It is found in the host nucleus. The protein localises to the host lipid droplet. The protein resides in the virion membrane. Its subcellular location is the host mitochondrion. It localises to the host cell membrane. It is found in the host perinuclear region. It carries out the reaction Hydrolysis of four peptide bonds in the viral precursor polyprotein, commonly with Asp or Glu in the P6 position, Cys or Thr in P1 and Ser or Ala in P1'.. It catalyses the reaction a ribonucleoside 5'-triphosphate + H2O = a ribonucleoside 5'-diphosphate + phosphate + H(+). The catalysed reaction is ATP + H2O = ADP + phosphate + H(+). The enzyme catalyses RNA(n) + a ribonucleoside 5'-triphosphate = RNA(n+1) + diphosphate. Inhibited by the antiviral drug hexamethylene amiloride. Inhibition by amantadine appears to be genotype-dependent. Also inhibited by long-alkyl-chain iminosugar derivatives. Its activity is regulated as follows. Activity is up-regulated by PRK2/PKN2-mediated phosphorylation. Functionally, packages viral RNA to form a viral nucleocapsid, and promotes virion budding. Participates in the viral particle production as a result of its interaction with the non-structural protein 5A. Binds RNA and may function as a RNA chaperone to induce the RNA structural rearrangements taking place during virus replication. Modulates viral translation initiation by interacting with viral IRES and 40S ribosomal subunit. Affects various cell signaling pathways, host immunity and lipid metabolism. Prevents the establishment of cellular antiviral state by blocking the interferon-alpha/beta (IFN-alpha/beta) and IFN-gamma signaling pathways and by blocking the formation of phosphorylated STAT1 and promoting ubiquitin-mediated proteasome-dependent degradation of STAT1. Activates STAT3 leading to cellular transformation. Regulates the activity of cellular genes, including c-myc and c-fos. May repress the promoter of p53, and sequester CREB3 and SP110 isoform 3/Sp110b in the cytoplasm. Represses cell cycle negative regulating factor CDKN1A, thereby interrupting an important check point of normal cell cycle regulation. Targets transcription factors involved in the regulation of inflammatory responses and in the immune response: suppresses TNF-induced NF-kappa-B activation, and activates AP-1. Binds to dendritic cells (DCs) via C1QR1, resulting in down-regulation of T-lymphocytes proliferation. Alters lipid metabolism by interacting with hepatocellular proteins involved in lipid accumulation and storage. Induces up-regulation of FAS promoter activity, and thereby contributes to the increased triglyceride accumulation in hepatocytes (steatosis). In terms of biological role, forms a heterodimer with envelope glycoprotein E2, which mediates virus attachment to the host cell, virion internalization through clathrin-dependent endocytosis and fusion with host membrane. Fusion with the host cell is most likely mediated by both E1 and E2, through conformational rearrangements of the heterodimer required for fusion rather than a classical class II fusion mechanism. E1/E2 heterodimer binds host apolipoproteins such as APOB and APOE thereby forming a lipo-viro-particle (LVP). APOE associated to the LVP allows the initial virus attachment to cell surface receptors such as the heparan sulfate proteoglycans (HSPGs), syndecan-1 (SDC1), syndecan-1 (SDC2), the low-density lipoprotein receptor (LDLR) and scavenger receptor class B type I (SCARB1). The cholesterol transfer activity of SCARB1 allows E2 exposure and binding of E2 to SCARB1 and the tetraspanin CD81. E1/E2 heterodimer binding on CD81 activates the epithelial growth factor receptor (EGFR) signaling pathway. Diffusion of the complex E1-E2-EGFR-SCARB1-CD81 to the cell lateral membrane allows further interaction with Claudin 1 (CLDN1) and occludin (OCLN) to finally trigger HCV entry. Its function is as follows. Forms a heterodimer with envelope glycoprotein E1, which mediates virus attachment to the host cell, virion internalization through clathrin-dependent endocytosis and fusion with host membrane. Fusion with the host cell is most likely mediated by both E1 and E2, through conformational rearrangements of the heterodimer required for fusion rather than a classical class II fusion mechanism. The interaction between envelope glycoprotein E2 and host apolipoprotein E/APOE allows the proper assembly, maturation and infectivity of the viral particles. This interaction is probably promoted via the up-regulation of cellular autophagy by the virus. E1/E2 heterodimer binds host apolipoproteins such as APOB and APOE thereby forming a lipo-viro-particle (LVP). APOE associated to the LVP allows the initial virus attachment to cell surface receptors such as the heparan sulfate proteoglycans (HSPGs), syndecan-1 (SDC1), syndecan-1 (SDC2), the low-density lipoprotein receptor (LDLR) and scavenger receptor class B type I (SCARB1). The cholesterol transfer activity of SCARB1 allows E2 exposure and binding of E2 to SCARB1 and the tetraspanin CD81. E1/E2 heterodimer binding on CD81 activates the epithelial growth factor receptor (EGFR) signaling pathway. Diffusion of the complex E1-E2-EGFR-SCARB1-CD81 to the cell lateral membrane allows further interaction with Claudin 1 (CLDN1) and occludin (OCLN) to finally trigger HCV entry. Inhibits host EIF2AK2/PKR activation, preventing the establishment of an antiviral state. Viral ligand for CD209/DC-SIGN and CLEC4M/DC-SIGNR, which are respectively found on dendritic cells (DCs), and on liver sinusoidal endothelial cells and macrophage-like cells of lymph node sinuses. These interactions allow the capture of circulating HCV particles by these cells and subsequent facilitated transmission to permissive cells such as hepatocytes and lymphocyte subpopulations. The interaction between E2 and host amino acid transporter complex formed by SLC3A2 and SLC7A5/LAT1 may facilitate viral entry into host cell. Ion channel protein that acts as a viroporin and plays an essential role in the assembly, envelopment and secretion of viral particles. Regulates the host cell secretory pathway, which induces the intracellular retention of viral glycoproteins and favors assembly of viral particles. Creates a pore in acidic organelles and releases Ca(2+) and H(+) in the cytoplasm of infected cells, leading to a productive viral infection. High levels of cytoplasmic Ca(2+) may trigger membrane trafficking and transport of viral ER-associated proteins to viroplasms, sites of viral genome replication. This ionic imbalance induces the assembly of the inflammasome complex, which triggers the maturation of pro-IL-1beta into IL-1beta through the action of caspase-1. Targets also host mitochondria and induces mitochondrial depolarization. In addition of its role as a viroporin, acts as a lipid raft adhesion factor. Functionally, cysteine protease required for the proteolytic auto-cleavage between the non-structural proteins NS2 and NS3. The N-terminus of NS3 is required for the function of NS2 protease (active region NS2-3). Promotes the initiation of viral particle assembly by mediating the interaction between structural and non-structural proteins. In terms of biological role, displays three enzymatic activities: serine protease with a chymotrypsin-like fold, NTPase and RNA helicase. NS3 serine protease, in association with NS4A, is responsible for the cleavages of NS3-NS4A, NS4A-NS4B, NS4B-NS5A and NS5A-NS5B. The NS3/NS4A complex prevents phosphorylation of host IRF3, thus preventing the establishment of dsRNA induced antiviral state. The NS3/NS4A complex induces host amino acid transporter component SLC3A2, thus contributing to HCV propagation. NS3 RNA helicase binds to RNA and unwinds both dsDNA and dsRNA in the 3' to 5' direction, and likely resolves RNA complicated stable secondary structures in the template strand. Binds a single ATP and catalyzes the unzipping of a single base pair of dsRNA. Inhibits host antiviral proteins TBK1 and IRF3 thereby preventing the establishment of an antiviral state. Cleaves host MAVS/CARDIF thereby preventing the establishment of an antiviral state. Cleaves host TICAM1/TRIF, thereby disrupting TLR3 signaling and preventing the establishment of an antiviral state. Its function is as follows. Peptide cofactor which forms a non-covalent complex with the N-terminal of NS3 serine protease. The NS3/NS4A complex prevents phosphorylation of host IRF3, thus preventing the establishment of dsRNA induced antiviral state. The NS3/NS4A complex induces host amino acid transporter component SLC3A2, thus contributing to HCV propagation. Induces a specific membrane alteration that serves as a scaffold for the virus replication complex. This membrane alteration gives rise to the so-called ER-derived membranous web that contains the replication complex. NS4B self-interaction contributes to its function in membranous web formation. Promotes host TRIF protein degradation in a CASP8-dependent manner thereby inhibiting host TLR3-mediated interferon signaling. Disrupts the interaction between STING and TBK1 contributing to the inhibition of interferon signaling. Functionally, phosphorylated protein that is indispensable for viral replication and assembly. Both hypo- and hyperphosphorylated states are required for the viral life cycle. The hyperphosphorylated form of NS5A is an inhibitor of viral replication. Involved in RNA-binding and especially in binding to the viral genome. Zinc is essential for RNA-binding. Participates in the viral particle production as a result of its interaction with the mature viral core protein. Its interaction with host VAPB may target the viral replication complex to vesicles. Down-regulates viral IRES translation initiation. Mediates interferon resistance, presumably by interacting with and inhibiting host EIF2AK2/PKR. Prevents BIN1-induced apoptosis. Acts as a transcriptional activator of some host genes important for viral replication when localized in the nucleus. Via the interaction with host PACSIN2, modulates lipid droplet formation in order to promote virion assembly. Modulates TNFRSF21/DR6 signaling pathway for viral propagation. In terms of biological role, RNA-dependent RNA polymerase that performs primer-template recognition and RNA synthesis during viral replication. Initiates RNA transcription/replication at a flavin adenine dinucleotide (FAD), resulting in a 5'- FAD cap on viral RNAs. In this way, recognition of viral 5' RNA by host pattern recognition receptors can be bypassed, thereby evading activation of antiviral pathways. This Homo sapiens (Human) protein is Genome polyprotein.